Reading from the N-terminus, the 788-residue chain is Auxin response factor 4 (788 aa).

Residues 1–19 (MEFDLNTEIAEVEEEENDD) show a composition bias toward acidic residues. The tract at residues 1–53 (MEFDLNTEIAEVEEEENDDVGVGVGGGTRIDKGRLGISPSSSSSCSSGSSSSS) is disordered. Positions 38 to 53 (SPSSSSSCSSGSSSSS) are enriched in low complexity. A DNA-binding region (TF-B3) is located at residues 177–279 (FCKTLTASDT…ELRLGIRRAA (103 aa)). Residues 413–433 (LSIQSSPRPKRPWAGLLDTTP) are disordered. One can recognise a PB1 domain in the interval 665 to 747 (RICTKVHKQG…VVWKIHLYTK (83 aa)).

It belongs to the ARF family. As to quaternary structure, homodimers and heterodimers. Expressed in the whole plant.

It is found in the nucleus. Its function is as follows. Auxin response factors (ARFs) are transcriptional factors that bind specifically to the DNA sequence 5'-TGTCTC-3' found in the auxin-responsive promoter elements (AuxREs). Could act as transcriptional activator or repressor. Formation of heterodimers with Aux/IAA proteins may alter their ability to modulate early auxin response genes expression. This Arabidopsis thaliana (Mouse-ear cress) protein is Auxin response factor 4 (ARF4).